Consider the following 1860-residue polypeptide: Collagen alpha-1(XXVII) chain (1860 aa).

An N-terminal signal peptide occupies residues 1-41 (MGAGSARGARGTAAAAAARGGGFLFSWILVSFACHLASTQG). Positions 42–624 (APEDVDILQR…AGSTPFPLLM (583 aa)) are cleaved as a propeptide — N-terminal propeptide. The 166-residue stretch at 71 to 236 (QSGFIFTQRA…NYCTHLRKQC (166 aa)) folds into the Laminin G-like domain. Asn-271 carries N-linked (GlcNAc...) asparagine glycosylation. Disordered stretches follow at residues 278 to 608 (ALGS…TSSG), 625 to 772 (GPPG…GSDG), and 851 to 1625 (LKGD…IQLQ). 2 stretches are compositionally biased toward polar residues: residues 298–309 (TKPQRTSPTNPH) and 386–409 (HPTQ…QVPP). Pro residues predominate over residues 432-445 (MPRPPPPSTRPLPP). Composition is skewed to low complexity over residues 446–457 (TTSSSKKPIPTL) and 485–505 (TALS…RPPA). The segment covering 509-518 (PPTSGTSTPR) has biased composition (polar residues). Low complexity-rich tracts occupy residues 572-588 (TTRP…QTTP) and 599-608 (SSSPRPTSSG). Collagen-like domains lie at 625–679 (GPPG…GDPG), 688–747 (GAKG…PGPV), 748–807 (GDPG…DGNP), 808–867 (GELG…SGDP), 871–930 (GDKG…KGKP), 931–990 (GARG…PGPV), 1003–1062 (GEPG…RGAK), 1066–1125 (GPRG…PGTK), 1126–1185 (GLPG…IGQR), 1192–1251 (GDSG…QGEK), 1258–1317 (GAKG…KGIV), 1318–1378 (GPLG…RGKP), 1382–1441 (GQPG…EGIA), 1442–1501 (GPDG…PGQL), 1502–1561 (GPPG…QGPR), and 1562–1621 (GPPG…PGGP). Residues 625 to 1618 (GPPGPKGDCG…RGRPGPPGPP (994 aa)) form a triple-helical region region. Pro residues predominate over residues 654–669 (RGPPGPYGNPGLPGPP). The segment covering 714–734 (PGPAGHPGEQGQPGPEGSPGA) has biased composition (low complexity). 2 stretches are compositionally biased toward low complexity: residues 911 to 924 (FPGD…NGPE) and 932 to 944 (ARGL…QLGP). Positions 1033–1042 (GMPGGMGTPG) are enriched in gly residues. Positions 1043–1053 (EPGPQGPPGSR) are enriched in pro residues. Pro residues predominate over residues 1130–1142 (EPGPQGPQGPIGP). 2 stretches are compositionally biased toward basic and acidic residues: residues 1202 to 1220 (LKGD…EKGQ) and 1241 to 1253 (PEGK…EKGR). Basic and acidic residues-rich tracts occupy residues 1326-1338 (KGEK…DGKA) and 1350-1360 (PVGDRGDRGEP). Positions 1449 to 1458 (RDGQAGQQGE) are enriched in low complexity. Positions 1572–1587 (IVGPLGILGPSGLPGP) are enriched in low complexity. Residues 1603–1620 (RGPPGPRGRPGPPGPPGG) show a composition bias toward pro residues. Residues 1622–1860 (IQLQQDDLGA…RLEVGPACFL (239 aa)) constitute a propeptide, C-terminal propeptide. Residues 1660-1860 (GEIFKTLHYL…RLEVGPACFL (201 aa)) enclose the Fibrillar collagen NC1 domain. Disulfide bonds link Cys-1690/Cys-1722, Cys-1731/Cys-1858, and Cys-1767/Cys-1811. Residues Asp-1708, Asn-1710, Cys-1713, and Asp-1716 each coordinate Ca(2+). A glycan (N-linked (GlcNAc...) asparagine) is linked at Asn-1769.

The protein belongs to the fibrillar collagen family.

The protein localises to the secreted. It localises to the extracellular space. Its subcellular location is the extracellular matrix. Its function is as follows. Plays a role during the calcification of cartilage and the transition of cartilage to bone. This chain is Collagen alpha-1(XXVII) chain (COL27A1), found in Homo sapiens (Human).